Consider the following 70-residue polypeptide: Sec-independent protein translocase protein TatA (70 aa).

A helical transmembrane segment spans residues 1 to 21 (MFGLGGQELILILLIILLLFG). Over residues 50–62 (FNKVVDEPPRKTP) the composition is skewed to basic and acidic residues. The segment at 50–70 (FNKVVDEPPRKTPENSTGSKS) is disordered.

This sequence belongs to the TatA/E family. As to quaternary structure, forms a complex with TatC.

It is found in the cell inner membrane. Functionally, part of the twin-arginine translocation (Tat) system that transports large folded proteins containing a characteristic twin-arginine motif in their signal peptide across membranes. TatA could form the protein-conducting channel of the Tat system. This chain is Sec-independent protein translocase protein TatA, found in Chlorobium limicola (strain DSM 245 / NBRC 103803 / 6330).